The primary structure comprises 372 residues: Cyclin-A3-2 (372 aa).

The interval 53-73 is disordered; sequence NQKKETQKPKRNLKPPPAKQI.

The protein belongs to the cyclin family. Cyclin AB subfamily.

The protein is Cyclin-A3-2 (CYCA3-2) of Arabidopsis thaliana (Mouse-ear cress).